Here is a 114-residue protein sequence, read N- to C-terminus: UPF0342 protein SERP1381 (114 aa).

It belongs to the UPF0342 family.

This is UPF0342 protein SERP1381 from Staphylococcus epidermidis (strain ATCC 35984 / DSM 28319 / BCRC 17069 / CCUG 31568 / BM 3577 / RP62A).